Consider the following 324-residue polypeptide: Viral cathepsin (324 aa).

The N-terminal stretch at 1-16 (MNKIMLCLLVCGVVHA) is a signal peptide. Positions 17–113 (ATYDLLKAPN…VILDRPPDRG (97 aa)) are cleaved as a propeptide — activation peptide. 3 cysteine pairs are disulfide-bonded: Cys134-Cys175, Cys168-Cys208, and Cys263-Cys311. The active site involves Cys137. Asn159 carries N-linked (GlcNAc...) asparagine; by host glycosylation. Residues His270 and Asn290 contribute to the active site.

This sequence belongs to the peptidase C1 family. In terms of processing, synthesized as an inactive proenzyme and activated by proteolytic removal of the inhibitory propeptide.

It carries out the reaction Endopeptidase of broad specificity, hydrolyzing substrates of both cathepsin L and cathepsin B.. Cysteine protease that plays an essential role in host liquefaction to facilitate horizontal transmission of the virus. May participate in the degradation of foreign protein expressed by the baculovirus system. The polypeptide is Viral cathepsin (VCATH) (Orgyia pseudotsugata (Douglas-fir tussock moth)).